The primary structure comprises 283 residues: S-methyl-5'-thioadenosine phosphorylase (283 aa).

Residue T18 participates in phosphate binding. Position 51 is an N6-acetyllysine (K51). Phosphate-binding positions include 60–61 (RH) and 93–94 (TA). M196 is a binding site for substrate. Residue T197 coordinates phosphate. 220-222 (DYD) contributes to the substrate binding site.

Belongs to the PNP/MTAP phosphorylase family. MTAP subfamily. In terms of assembly, homotrimer.

It is found in the cytoplasm. It localises to the nucleus. It carries out the reaction S-methyl-5'-thioadenosine + phosphate = 5-(methylsulfanyl)-alpha-D-ribose 1-phosphate + adenine. It functions in the pathway amino-acid biosynthesis; L-methionine biosynthesis via salvage pathway; S-methyl-5-thio-alpha-D-ribose 1-phosphate from S-methyl-5'-thioadenosine (phosphorylase route): step 1/1. Catalyzes the reversible phosphorylation of S-methyl-5'-thioadenosine (MTA) to adenine and 5-methylthioribose-1-phosphate. Involved in the breakdown of MTA, a major by-product of polyamine biosynthesis. Responsible for the first step in the methionine salvage pathway after MTA has been generated from S-adenosylmethionine. Has broad substrate specificity with 6-aminopurine nucleosides as preferred substrates. The chain is S-methyl-5'-thioadenosine phosphorylase from Bos taurus (Bovine).